The chain runs to 256 residues: Protein YABBY 4 (256 aa).

A C4-type zinc finger spans residues 30–57 (CNCCDTILAVGVPCSSLFKTVTVRCGHC). The tract at residues 127–168 (SCASNAPAMQMPPAKPVQQEPELPKNAPASANRPPEKRQRVP) is disordered.

Belongs to the YABBY family. Preferentially expressed in immature organs containing meristems and organ primordia. Expressed in phloem of developing vascular tissues of young seedling shoots. Expressed in the phloem of midvein vasculature of young leaves. Does not show polar expression pattern in leaf primordia.

The protein localises to the nucleus. Seems to be associated with phloem cell differentiation. The chain is Protein YABBY 4 (YAB4) from Oryza sativa subsp. japonica (Rice).